We begin with the raw amino-acid sequence, 191 residues long: Putative glutathione-dependent formaldehyde-activating enzyme (191 aa).

Residues 20 to 166 (FPGGNLYCLC…FQSLGLQTYD (147 aa)) enclose the CENP-V/GFA domain. Zn(2+)-binding residues include cysteine 27, cysteine 29, cysteine 48, cysteine 50, cysteine 53, cysteine 95, and cysteine 98.

It belongs to the Gfa family. It depends on Zn(2+) as a cofactor.

The enzyme catalyses S-(hydroxymethyl)glutathione = glutathione + formaldehyde. It functions in the pathway one-carbon metabolism; formaldehyde degradation; formate from formaldehyde (glutathione route): step 1/3. Catalyzes the condensation of formaldehyde and glutathione to S-hydroxymethylglutathione. The polypeptide is Putative glutathione-dependent formaldehyde-activating enzyme (Aspergillus flavus (strain ATCC 200026 / FGSC A1120 / IAM 13836 / NRRL 3357 / JCM 12722 / SRRC 167)).